Consider the following 491-residue polypeptide: UDP-GalNAc:beta-1,3-N-acetylgalactosaminyltransferase 2 (491 aa).

Topologically, residues 1 to 2 are cytoplasmic; the sequence is MR. The chain crosses the membrane as a helical; Signal-anchor for type II membrane protein span at residues 3–23; it reads SAAAALSVCVLAVLLHWICWT. The Lumenal segment spans residues 24-491; that stretch reads DRSAELLGFR…NKCGDPCGCS (468 aa). N-linked (GlcNAc...) asparagine glycosylation is found at Asn167 and Asn230.

Belongs to the glycosyltransferase 31 family.

It localises to the golgi apparatus membrane. Its subcellular location is the endoplasmic reticulum. The catalysed reaction is 3-O-(N-acetyl-beta-D-glucosaminyl-(1-&gt;4)-alpha-D-mannosyl)-L-threonyl-[protein] + UDP-N-acetyl-alpha-D-galactosamine = 3-O-[beta-D-GalNAc-(1-&gt;3)-beta-D-GlcNAc-(1-&gt;4)-alpha-D-Man]-L-Thr-[protein] + UDP + H(+). The protein operates within protein modification; protein glycosylation. In terms of biological role, beta-1,3-N-acetylgalactosaminyltransferase that synthesizes a unique carbohydrate structure, GalNAc-beta-1-3GlcNAc, on N- and O-glycans. Has no galactose nor galactosaminyl transferase activity toward any acceptor substrate. Involved in alpha-dystroglycan (dag1) glycosylation. This Danio rerio (Zebrafish) protein is UDP-GalNAc:beta-1,3-N-acetylgalactosaminyltransferase 2 (b3galnt2).